Consider the following 931-residue polypeptide: Bifunctional glutamine synthetase adenylyltransferase/adenylyl-removing enzyme (931 aa).

Residues 1 to 434 are adenylyl removase; that stretch reads MTLAPADLPV…STEFAALLAP (434 aa). Positions 441–931 are adenylyl transferase; the sequence is PDALANYWRS…ACRAAELPFA (491 aa).

Belongs to the GlnE family. It depends on Mg(2+) as a cofactor.

The enzyme catalyses [glutamine synthetase]-O(4)-(5'-adenylyl)-L-tyrosine + phosphate = [glutamine synthetase]-L-tyrosine + ADP. It carries out the reaction [glutamine synthetase]-L-tyrosine + ATP = [glutamine synthetase]-O(4)-(5'-adenylyl)-L-tyrosine + diphosphate. Involved in the regulation of glutamine synthetase GlnA, a key enzyme in the process to assimilate ammonia. When cellular nitrogen levels are high, the C-terminal adenylyl transferase (AT) inactivates GlnA by covalent transfer of an adenylyl group from ATP to specific tyrosine residue of GlnA, thus reducing its activity. Conversely, when nitrogen levels are low, the N-terminal adenylyl removase (AR) activates GlnA by removing the adenylyl group by phosphorolysis, increasing its activity. The regulatory region of GlnE binds the signal transduction protein PII (GlnB) which indicates the nitrogen status of the cell. The protein is Bifunctional glutamine synthetase adenylyltransferase/adenylyl-removing enzyme of Stenotrophomonas maltophilia (strain K279a).